The sequence spans 101 residues: Small ribosomal subunit protein uS14 (101 aa).

Belongs to the universal ribosomal protein uS14 family. In terms of assembly, part of the 30S ribosomal subunit. Contacts proteins S3 and S10.

Functionally, binds 16S rRNA, required for the assembly of 30S particles and may also be responsible for determining the conformation of the 16S rRNA at the A site. The chain is Small ribosomal subunit protein uS14 from Francisella tularensis subsp. novicida (strain U112).